The sequence spans 207 residues: Thiamine-phosphate synthase (207 aa).

Residues 35–39 (QYRDK) and asparagine 67 each bind 4-amino-2-methyl-5-(diphosphooxymethyl)pyrimidine. Aspartate 68 and aspartate 86 together coordinate Mg(2+). Position 105 (threonine 105) interacts with 4-amino-2-methyl-5-(diphosphooxymethyl)pyrimidine. Position 132–134 (132–134 (SVT)) interacts with 2-[(2R,5Z)-2-carboxy-4-methylthiazol-5(2H)-ylidene]ethyl phosphate. Position 135 (lysine 135) interacts with 4-amino-2-methyl-5-(diphosphooxymethyl)pyrimidine. Residue glycine 162 participates in 2-[(2R,5Z)-2-carboxy-4-methylthiazol-5(2H)-ylidene]ethyl phosphate binding.

The protein belongs to the thiamine-phosphate synthase family. Mg(2+) serves as cofactor.

The catalysed reaction is 2-[(2R,5Z)-2-carboxy-4-methylthiazol-5(2H)-ylidene]ethyl phosphate + 4-amino-2-methyl-5-(diphosphooxymethyl)pyrimidine + 2 H(+) = thiamine phosphate + CO2 + diphosphate. The enzyme catalyses 2-(2-carboxy-4-methylthiazol-5-yl)ethyl phosphate + 4-amino-2-methyl-5-(diphosphooxymethyl)pyrimidine + 2 H(+) = thiamine phosphate + CO2 + diphosphate. It catalyses the reaction 4-methyl-5-(2-phosphooxyethyl)-thiazole + 4-amino-2-methyl-5-(diphosphooxymethyl)pyrimidine + H(+) = thiamine phosphate + diphosphate. Its pathway is cofactor biosynthesis; thiamine diphosphate biosynthesis; thiamine phosphate from 4-amino-2-methyl-5-diphosphomethylpyrimidine and 4-methyl-5-(2-phosphoethyl)-thiazole: step 1/1. Functionally, condenses 4-methyl-5-(beta-hydroxyethyl)thiazole monophosphate (THZ-P) and 2-methyl-4-amino-5-hydroxymethyl pyrimidine pyrophosphate (HMP-PP) to form thiamine monophosphate (TMP). In Pseudomonas putida (strain ATCC 47054 / DSM 6125 / CFBP 8728 / NCIMB 11950 / KT2440), this protein is Thiamine-phosphate synthase.